The following is a 506-amino-acid chain: MADINTAQPRDWLLEMSNIDKSFPGVKALDNVNLKVRPYSIHALMGENGAGKSTLLKCLFGIYKKDSGSIIFQGQEIEFKSSKEALEQGVSMVHQELNLVLQRTVMDNMWLGRYPTKGFFVDQDKMYKETKAIFDELDIDIDPRDKVATLSVSQMQMIEIAKAFSYNAKIVIMDEPTSSLTEKEVNHLFTIIRKLKARGCGIVYISHKMEEIFQLCDEITILRDGQWITTQPLDGLTMDQIISMMVGRSLSQRFPDRLNKPGEVILEVKNLTSLRQPSIRDVSFDLHKGEILGIAGLVGAKRTDIVETLFGIREKVTGTIKLHGKNINNHSANEAINHGFALVTEERRSTGIYAYLDISFNSLISNIRNYKNKFGLLDNTRMKSDTQWVIDAMRVKTPGHRTNIGSLSGGNQQKVIIGRWLLTQPEILMLDEPTRGIDVGAKFEIYQLMTELAKKDKGIIIISSEMPELLGITDRILVMSNGQVAGIVDTKQTTQNEILRLASLHL.

ABC transporter domains are found at residues 14-249 (LEMS…VGRS) and 264-506 (VILE…SLHL). An ATP-binding site is contributed by 46 to 53 (GENGAGKS).

This sequence belongs to the ABC transporter superfamily. Galactose/methyl galactoside importer (TC 3.A.1.2.3) family. In terms of assembly, the complex is composed of one ATP-binding protein (MglA), two transmembrane proteins (MglC) and a solute-binding protein (MglB).

It localises to the cell inner membrane. It catalyses the reaction D-galactose(out) + ATP + H2O = D-galactose(in) + ADP + phosphate + H(+). The catalysed reaction is methyl beta-D-galactoside(out) + ATP + H2O = methyl beta-D-galactoside(in) + ADP + phosphate + H(+). In terms of biological role, part of the ABC transporter complex MglABC involved in galactose/methyl galactoside import. Responsible for energy coupling to the transport system. The chain is Galactose/methyl galactoside import ATP-binding protein MglA from Yersinia pestis bv. Antiqua (strain Antiqua).